The sequence spans 499 residues: Endoglucanase (499 aa).

The signal sequence occupies residues 1 to 29 (MKRSISIFITCLLITLLTMGGMIASPASA). Substrate is bound by residues H65, 69-70 (WY), Y96, and H131. E169 serves as the catalytic Proton donor. A substrate-binding site is contributed by Y231. E257 acts as the Nucleophile in catalysis. Residues 263-264 (AS), W291, and 296-298 (KQE) contribute to the substrate site. Residues 350-499 (QENGISVQYR…GKLIWGTEPN (150 aa)) enclose the CBM3 domain.

This sequence belongs to the glycosyl hydrolase 5 (cellulase A) family.

The catalysed reaction is Endohydrolysis of (1-&gt;4)-beta-D-glucosidic linkages in cellulose, lichenin and cereal beta-D-glucans.. The chain is Endoglucanase (eglS) from Bacillus subtilis (strain 168).